The primary structure comprises 316 residues: MTNVFADLNLHPSDNRGHLLTEKVNPKSECLDQLTTESLVTLFCEEDREPQRAVAAAIPELIQAVEAITDRLRSGGRLFYLGAGTSGRLGVLDAAECPPTFCSDPDLVQGVLAGGSAALLKSSEGLEDIEQLGKKDLEERDFSPADCLVGIAAGGTTPYVKGGLAYAKEINALAIAISCVPIEQAELPCSIDIRLLTGPELLTGSTRLKAGTATKMALNILSTCAMVRLGKVFGNRMVDVAATNIKLMDRALRILHDLADVDRVRGTELLQASDGSVKVALLMHTCGLDAETAQKLLIEHNNQLRTALARCKNCIA.

The SIS domain occupies 68-231; the sequence is ITDRLRSGGR…STCAMVRLGK (164 aa). The active-site Proton donor is the E96. E127 is a catalytic residue.

This sequence belongs to the GCKR-like family. MurNAc-6-P etherase subfamily. In terms of assembly, homodimer.

It carries out the reaction N-acetyl-D-muramate 6-phosphate + H2O = N-acetyl-D-glucosamine 6-phosphate + (R)-lactate. It participates in amino-sugar metabolism; N-acetylmuramate degradation. Functionally, specifically catalyzes the cleavage of the D-lactyl ether substituent of MurNAc 6-phosphate, producing GlcNAc 6-phosphate and D-lactate. The polypeptide is N-acetylmuramic acid 6-phosphate etherase (Prochlorococcus marinus (strain MIT 9313)).